A 530-amino-acid polypeptide reads, in one-letter code: Alpha-(1,3)-fucosyltransferase 4 (530 aa).

Disordered regions lie at residues 1 to 48 (MRRL…RAVP) and 66 to 113 (HLGG…TPAD). Topologically, residues 1–147 (MRRLWGAARK…GGRRRWRRGR (147 aa)) are cytoplasmic. Over residues 88-106 (ASGERQRRLEPQLQHESRC) the composition is skewed to basic and acidic residues. Residues 148 to 172 (GLPWTVCVLAAAGLTCTALITYACW) traverse the membrane as a helical; Signal-anchor for type II membrane protein segment. Residues 173–530 (GQLPPLPWAS…IRNLASWFER (358 aa)) lie on the Lumenal side of the membrane. N-linked (GlcNAc...) asparagine glycosylation is found at asparagine 216 and asparagine 315.

The protein belongs to the glycosyltransferase 10 family.

The protein resides in the golgi apparatus. The protein localises to the golgi stack membrane. The enzyme catalyses a beta-D-galactosyl-(1-&gt;4)-N-acetyl-beta-D-glucosaminyl derivative + GDP-beta-L-fucose = a beta-D-galactosyl-(1-&gt;4)-[alpha-L-fucosyl-(1-&gt;3)]-N-acetyl-beta-D-glucosaminyl derivative + GDP + H(+). The catalysed reaction is an N-acetyl-alpha-neuraminyl-(2-&gt;3)-beta-D-galactosyl-(1-&gt;4)-N-acetyl-beta-D-glucosaminyl derivative + GDP-beta-L-fucose = an alpha-Neu5Ac-(2-&gt;3)-beta-D-Gal-(1-&gt;4)-[alpha-L-Fuc-(1-&gt;3)]-beta-D-GlcNAc derivative + GDP + H(+). It catalyses the reaction an alpha-Neu5Ac-(2-&gt;3)-beta-D-Gal-(1-&gt;4)-beta-D-GlcNAc-(1-&gt;3)-beta-D-Gal-(1-&gt;4)-beta-D-GlcNAc derivative + GDP-beta-L-fucose = an alpha-Neu5Ac-(2-&gt;3)-beta-D-Gal-(1-&gt;4)-beta-D-GlcNAc-(1-&gt;3)-beta-D-Gal-(1-&gt;4)-[alpha-L-Fuc-(1-&gt;3)]-beta-D-GlcNAc derivative + GDP + H(+). It carries out the reaction an alpha-Neu5Ac-(2-&gt;3)-beta-D-Gal-(1-&gt;4)-beta-D-GlcNAc6S derivative + GDP-beta-L-fucose = an alpha-Neu5Ac-(2-&gt;3)-beta-D-Gal-(1-&gt;4)-[alpha-L-Fuc-(1-&gt;3)]-beta-D-GlcNAc6S derivative + GDP + H(+). The protein operates within protein modification; protein glycosylation. Catalyzes alpha(1-&gt;3) linkage of fucosyl moiety transferred from GDP-beta-L-fucose to N-acetyl glucosamine (GlcNAc) within type 2 lactosamine (LacNAc, Gal-beta(1-&gt;4)GlcNAc) glycan attached to N- or O-linked glycoproteins. Robustly fucosylates nonsialylated distal LacNAc unit of the polylactosamine chain to form Lewis X antigen (CD15), a glycan determinant known to mediate important cellular functions in development and immunity. Fucosylates with lower efficiency sialylated LacNAc acceptors to form sialyl Lewis X and 6-sulfo sialyl Lewis X determinants that serve as recognition epitopes for C-type lectins. Together with FUT7 contributes to SELE, SELL and SELP selectin ligand biosynthesis and selectin-dependent lymphocyte homing, leukocyte migration and blood leukocyte homeostasis. In a cell type specific manner, may also fucosylate the internal LacNAc unit of the polylactosamine chain to form VIM-2 antigen that serves as recognition epitope for SELE. This Pan troglodytes (Chimpanzee) protein is Alpha-(1,3)-fucosyltransferase 4 (FUT4).